The chain runs to 302 residues: Nudix hydrolase 22, chloroplastic (302 aa).

A chloroplast-targeting transit peptide spans 1–25; the sequence is MKSGASAASPTAKSFNFGSSRLLAL. In terms of domain architecture, Nudix hydrolase spans 73–229; the sequence is PKKAAVLICL…DSDYVIWGLT (157 aa). The Nudix box signature appears at 114-135; the sequence is KAEEHDKDDGITATREAEEEIG. Residues Glu129 and Glu133 each coordinate Mg(2+).

This sequence belongs to the Nudix hydrolase family. Mg(2+) is required as a cofactor. Mn(2+) serves as cofactor. As to expression, expressed in roots, leaves, stems and inflorescences.

The protein resides in the plastid. Its subcellular location is the chloroplast. Functionally, probably mediates the hydrolysis of some nucleoside diphosphate derivatives. This Arabidopsis thaliana (Mouse-ear cress) protein is Nudix hydrolase 22, chloroplastic (NUDT22).